The following is a 177-amino-acid chain: Large ribosomal subunit protein uL6 (177 aa).

This sequence belongs to the universal ribosomal protein uL6 family. As to quaternary structure, part of the 50S ribosomal subunit.

This protein binds to the 23S rRNA, and is important in its secondary structure. It is located near the subunit interface in the base of the L7/L12 stalk, and near the tRNA binding site of the peptidyltransferase center. This chain is Large ribosomal subunit protein uL6, found in Methanocella arvoryzae (strain DSM 22066 / NBRC 105507 / MRE50).